A 299-amino-acid chain; its full sequence is Oxygen-dependent coproporphyrinogen-III oxidase (299 aa).

Ser92 contributes to the substrate binding site. 2 residues coordinate a divalent metal cation: His96 and His106. The active-site Proton donor is the His106. Residue 108-110 participates in substrate binding; it reads NVR. Positions 145 and 175 each coordinate a divalent metal cation. The important for dimerization stretch occupies residues 240-275; sequence YVEFNLVWDRGTLFGLQTGGRTESILMSMPPLVRWE. 258–260 serves as a coordination point for substrate; sequence GGR.

It belongs to the aerobic coproporphyrinogen-III oxidase family. Homodimer. Requires a divalent metal cation as cofactor.

The protein resides in the cytoplasm. The catalysed reaction is coproporphyrinogen III + O2 + 2 H(+) = protoporphyrinogen IX + 2 CO2 + 2 H2O. Its pathway is porphyrin-containing compound metabolism; protoporphyrin-IX biosynthesis; protoporphyrinogen-IX from coproporphyrinogen-III (O2 route): step 1/1. Its function is as follows. Involved in the heme biosynthesis. Catalyzes the aerobic oxidative decarboxylation of propionate groups of rings A and B of coproporphyrinogen-III to yield the vinyl groups in protoporphyrinogen-IX. This chain is Oxygen-dependent coproporphyrinogen-III oxidase, found in Salmonella choleraesuis (strain SC-B67).